Here is a 482-residue protein sequence, read N- to C-terminus: Zinc metalloproteinase/disintegrin (482 aa).

The first 20 residues, 1 to 20 (MIQVLLVTICLAAFPYQGSS), serve as a signal peptide directing secretion. Positions 21–189 (MILESGNVND…IKASQLVVTA (169 aa)) are excised as a propeptide. The Peptidase M12B domain maps to 197-393 (RYIELVVVAD…HNPQCILNEP (197 aa)). Residues glutamate 200 and aspartate 284 each coordinate Ca(2+). Intrachain disulfides connect cysteine 308/cysteine 388 and cysteine 348/cysteine 372. Histidine 333 is a Zn(2+) binding site. Residue glutamate 334 is part of the active site. Zn(2+) contacts are provided by histidine 337 and histidine 343. Positions 388 and 391 each coordinate Ca(2+). Positions 394–409 (LRTDTVSTPVSGNELL) are excised as a propeptide. The Disintegrin domain occupies 401–482 (TPVSGNELLE…AGCPRNPFHA (82 aa)). 6 disulfides stabilise this stretch: cysteine 415-cysteine 430, cysteine 417-cysteine 425, cysteine 424-cysteine 447, cysteine 438-cysteine 444, cysteine 443-cysteine 468, and cysteine 456-cysteine 475. The Cell attachment site motif lies at 460 to 462 (RGD).

The protein belongs to the venom metalloproteinase (M12B) family. P-II subfamily. P-IId sub-subfamily. In terms of assembly, homodimer; disulfide-linked (disintegrin). Requires Zn(2+) as cofactor. As to expression, expressed by the venom gland.

It is found in the secreted. This recombinant protein hydrolyzes fibronectin, but has no effect on type I gelatin and type I to V collagens. Selectively hydrolyzes the Aalpha-chain of fibrinogen (FGA), but has no effect on fibrin. Functionally, inhibits ADP-induced platelet aggregation. Its function is as follows. Recombinant metalloproteinase-disintegrin Mt-d-I (393-408): hydrolyzes type I gelatin, type III and V collagens, but has no effect on type I, II, IV collagens and fibronectin. Selectively hydrolyzes the Aalpha-chain of fibrinogen, but has no effect on fibrin. May induce hemorrhage in vascular tissue. Strongly inhibits ADP-induced platelet aggregation. When concentrated, Mt-d-I undergoes autoproteolytic processing into metalloproteinase and disintegrin. In Gloydius brevicauda (Korean slamosa snake), this protein is Zinc metalloproteinase/disintegrin.